A 178-amino-acid polypeptide reads, in one-letter code: ATP-dependent protease subunit HslV (178 aa).

Threonine 2 is a catalytic residue. Residues serine 159, cysteine 162, and threonine 165 each coordinate Na(+).

It belongs to the peptidase T1B family. HslV subfamily. In terms of assembly, a double ring-shaped homohexamer of HslV is capped on each side by a ring-shaped HslU homohexamer. The assembly of the HslU/HslV complex is dependent on binding of ATP.

It is found in the cytoplasm. The enzyme catalyses ATP-dependent cleavage of peptide bonds with broad specificity.. With respect to regulation, allosterically activated by HslU binding. Functionally, protease subunit of a proteasome-like degradation complex believed to be a general protein degrading machinery. In Buchnera aphidicola subsp. Cinara cedri (strain Cc), this protein is ATP-dependent protease subunit HslV.